Here is a 596-residue protein sequence, read N- to C-terminus: Nucleotidyltransferase lcsQ (596 aa).

The transit peptide at 1–22 (MLLRLSPSRMALKRKLDSFLRN) directs the protein to the mitochondrion. Positions 475 to 504 (IVAHPGKPSQPADVPETPLSSGASKSKNLD) are disordered.

The protein belongs to the tRNA nucleotidyltransferase/poly(A) polymerase family.

It is found in the mitochondrion. Functionally, nucleotidyltransferase; part of the gene cluster that mediates the biosynthesis of the lipopeptide antibiotics leucinostatins that show extensive biological activities, including antimalarial, antiviral, antibacterial, antifungal, and antitumor activities, as well as phytotoxic. The function of lcsQ within the leucinostatins biosynthesis has not been identified yet. The sequence is that of Nucleotidyltransferase lcsQ from Purpureocillium lilacinum (Paecilomyces lilacinus).